A 318-amino-acid polypeptide reads, in one-letter code: Small ribosomal subunit protein uS3 (318 aa).

The KH type-2 domain occupies 17–86; sequence MDEYFAEQLS…NPQIDAQEVK (70 aa). A compositionally biased stretch (basic and acidic residues) spans 198 to 229; the sequence is SVEVEEPAEKPAEKPAEKPAEKAAAPKKEAAK. Residues 198–275 are disordered; that stretch reads SVEVEEPAEK…VQAETSEEIE (78 aa). Over residues 234-250 the composition is skewed to pro residues; it reads APAPEAPAPAPEAPAPA. The segment covering 253-275 has biased composition (acidic residues); it reads EEAEVAEPEEAEEVQAETSEEIE.

The protein belongs to the universal ribosomal protein uS3 family. In terms of assembly, part of the 30S ribosomal subunit.

Functionally, binds the lower part of the 30S subunit head. The chain is Small ribosomal subunit protein uS3 from Methanosarcina acetivorans (strain ATCC 35395 / DSM 2834 / JCM 12185 / C2A).